The primary structure comprises 181 residues: MIFLGPVLLTRGALSFFLTAGGSSVYRAWSWWLSGIHLFMAFSMSTSSLYKVGFGFVCTKSPCLRVSLISRSQPWRFYSVHNNFEAPDVVQLAAKARISLTPKEVEDYGPKIGQVIDWFGQLQGVNLENVEPAIRADTDKLSNLRPDEPIIYEDREEMIAGVPTLEEPFIKVPKILKSSME.

The protein belongs to the GatC family. Subunit of the heterotrimeric GatCAB amidotransferase (AdT) complex, composed of A, B and C subunits.

It is found in the mitochondrion. It localises to the plastid. Its subcellular location is the chloroplast. The enzyme catalyses L-glutamyl-tRNA(Gln) + L-glutamine + ATP + H2O = L-glutaminyl-tRNA(Gln) + L-glutamate + ADP + phosphate + H(+). Functionally, allows the formation of correctly charged Gln-tRNA(Gln) through the transamidation of misacylated Glu-tRNA(Gln) in chloroplasts and mitochondria. The reaction takes place in the presence of glutamine and ATP through an activated gamma-phospho-Glu-tRNA(Gln). The protein is Glutamyl-tRNA(Gln) amidotransferase subunit C, chloroplastic/mitochondrial of Picea sitchensis (Sitka spruce).